The primary structure comprises 555 residues: CTP synthase (555 aa).

Residues methionine 1–leucine 267 form an amidoligase domain region. Position 13 (serine 13) interacts with CTP. A UTP-binding site is contributed by serine 13. Residues serine 14–isoleucine 19 and aspartate 71 each bind ATP. Positions 71 and 141 each coordinate Mg(2+). Residues aspartate 148–glutamate 150, lysine 188–glutamine 193, and lysine 224 each bind CTP. UTP-binding positions include lysine 188–glutamine 193 and lysine 224. Residues lysine 292–serine 534 enclose the Glutamine amidotransferase type-1 domain. Position 354 (glycine 354) interacts with L-glutamine. The active-site Nucleophile; for glutamine hydrolysis is the cysteine 381. L-glutamine is bound by residues leucine 382–glutamine 385, glutamate 405, and arginine 462. Residues histidine 507 and glutamate 509 contribute to the active site. A disordered region spans residues proline 536–glutamine 555. Basic and acidic residues predominate over residues isoleucine 546–glutamine 555.

This sequence belongs to the CTP synthase family. In terms of assembly, homotetramer.

It catalyses the reaction UTP + L-glutamine + ATP + H2O = CTP + L-glutamate + ADP + phosphate + 2 H(+). The enzyme catalyses L-glutamine + H2O = L-glutamate + NH4(+). The catalysed reaction is UTP + NH4(+) + ATP = CTP + ADP + phosphate + 2 H(+). It functions in the pathway pyrimidine metabolism; CTP biosynthesis via de novo pathway; CTP from UDP: step 2/2. Its activity is regulated as follows. Allosterically activated by GTP, when glutamine is the substrate; GTP has no effect on the reaction when ammonia is the substrate. The allosteric effector GTP functions by stabilizing the protein conformation that binds the tetrahedral intermediate(s) formed during glutamine hydrolysis. Inhibited by the product CTP, via allosteric rather than competitive inhibition. Functionally, catalyzes the ATP-dependent amination of UTP to CTP with either L-glutamine or ammonia as the source of nitrogen. Regulates intracellular CTP levels through interactions with the four ribonucleotide triphosphates. The chain is CTP synthase from Prochlorococcus marinus (strain NATL1A).